The following is a 141-amino-acid chain: uncharacterized protein (141 aa).

The 108-residue stretch at 10-117 folds into the HIT domain; the sequence is IFCDIVQGSI…VPKYETGKGF (108 aa). Positions 102-106 match the Histidine triad motif motif; the sequence is HFHLH.

This is an uncharacterized protein from Mycoplasma genitalium (strain ATCC 33530 / DSM 19775 / NCTC 10195 / G37) (Mycoplasmoides genitalium).